A 513-amino-acid chain; its full sequence is Probable vesicular acetylcholine transporter-A (513 aa).

At Met-1–Arg-39 the chain is on the cytoplasmic side. Residues Ile-40–Val-60 form a helical membrane-spanning segment. Over Pro-61–Gly-98 the chain is Lumenal, vesicle. Asn-82 and Asn-86 each carry an N-linked (GlcNAc...) asparagine glycan. A helical transmembrane segment spans residues Val-99–Ile-119. Over Asp-120–Asp-125 the chain is Cytoplasmic. The chain crosses the membrane as a helical span at residues Ile-126–Glu-146. The Lumenal, vesicle segment spans residues Asn-147 to Ser-156. The helical transmembrane segment at Leu-157–Ala-174 threads the bilayer. At Asp-175 to Ala-186 the chain is on the cytoplasmic side. A helical transmembrane segment spans residues Leu-187 to Val-207. Over Leu-208–Arg-215 the chain is Lumenal, vesicle. The helical transmembrane segment at Phe-216 to Leu-236 threads the bilayer. Over Lys-237–Met-257 the chain is Cytoplasmic. Residues Ile-258–Phe-278 form a helical membrane-spanning segment. At Leu-279–Trp-296 the chain is on the lumenal, vesicle side. The N-linked (GlcNAc...) asparagine glycan is linked to Asn-292. The chain crosses the membrane as a helical span at residues Gln-297 to Val-317. At Lys-318–Gln-327 the chain is on the cytoplasmic side. A helical membrane pass occupies residues Trp-328–Cys-348. Residues Lys-349 to Gln-353 lie on the Lumenal, vesicle side of the membrane. A helical membrane pass occupies residues Leu-354 to Pro-374. The Cytoplasmic portion of the chain corresponds to Thr-375 to Ser-390. Residues Val-391–Gly-411 form a helical membrane-spanning segment. Residues Lys-412–Gly-418 are Lumenal, vesicle-facing. The chain crosses the membrane as a helical span at residues Phe-419 to Leu-439. Residues Leu-440–Ile-513 lie on the Cytoplasmic side of the membrane. Residues Arg-475–Ile-513 are disordered. Acidic residues predominate over residues Glu-504–Ile-513.

It belongs to the major facilitator superfamily. Vesicular transporter family.

It is found in the membrane. Involved in acetylcholine transport into synaptic vesicles. This is Probable vesicular acetylcholine transporter-A from Danio rerio (Zebrafish).